Here is a 365-residue protein sequence, read N- to C-terminus: Forkhead box protein H1 (365 aa).

The disordered stretch occupies residues 1 to 29 (MGPCSGSRLGPPEAESPSQPPKRRKKRYL). Residues 32–128 (DKPPYTYLAM…ALRLQNTALC (97 aa)) constitute a DNA-binding region (fork-head). Residues 151–215 (GRPYRPPSPP…TPPLPSSERP (65 aa)) form a disordered region. Pro residues predominate over residues 154–164 (YRPPSPPPPPS). An SMAD-interaction domain (SID) region spans residues 273–354 (LWGQLPTSYL…VSHPRDLAAP (82 aa)). The Fast/FoxH1 motif 1 (FM1) signature appears at 277 to 281 (LPTSY). Residues 287 to 293 (PNVVMPL) carry the Fast/FoxH1 motif 2 (FM2) motif. The SMAD interaction motif (SIM) signature appears at 327 to 348 (LDALFQGVPPNKSIYDVWVSHP).

As to quaternary structure, interacts with the MH2 domains of SMAD2 and SMAD3. In terms of tissue distribution, ubiquitous.

It localises to the nucleus. In terms of biological role, transcriptional activator. Recognizes and binds to the DNA sequence 5'-TGT[GT][GT]ATT-3'. Required for induction of the goosecoid (GSC) promoter by TGF-beta or activin signaling. Forms a transcriptionally active complex containing FOXH1/SMAD2/SMAD4 on a site on the GSC promoter called TARE (TGF-beta/activin response element). This Homo sapiens (Human) protein is Forkhead box protein H1 (FOXH1).